The chain runs to 405 residues: L-carnitine CoA-transferase (405 aa).

Residues K97 and R104 each contribute to the CoA site. D169 acts as the Nucleophile in catalysis.

This sequence belongs to the CoA-transferase III family. CaiB subfamily. Homodimer.

It localises to the cytoplasm. It catalyses the reaction crotonobetainyl-CoA + (R)-carnitine = crotonobetaine + (R)-carnitinyl-CoA. The enzyme catalyses 4-(trimethylamino)butanoyl-CoA + (R)-carnitine = (R)-carnitinyl-CoA + 4-(trimethylamino)butanoate. Its pathway is amine and polyamine metabolism; carnitine metabolism. Functionally, catalyzes the reversible transfer of the CoA moiety from gamma-butyrobetainyl-CoA to L-carnitine to generate L-carnitinyl-CoA and gamma-butyrobetaine. Is also able to catalyze the reversible transfer of the CoA moiety from gamma-butyrobetainyl-CoA or L-carnitinyl-CoA to crotonobetaine to generate crotonobetainyl-CoA. This is L-carnitine CoA-transferase from Escherichia coli (strain 55989 / EAEC).